A 303-amino-acid polypeptide reads, in one-letter code: uncharacterized protein (303 aa).

S63 is modified (phosphoserine).

The protein belongs to the HAD-like hydrolase superfamily.

It is found in the cytoplasm. The protein resides in the nucleus. This is an uncharacterized protein from Schizosaccharomyces pombe (strain 972 / ATCC 24843) (Fission yeast).